The sequence spans 190 residues: Natural killer cells antigen CD94 (190 aa).

Over 1–10 (MAAFRTTAWR) the chain is Cytoplasmic. The helical; Signal-anchor for type II membrane protein transmembrane segment at 11–31 (LISGVLGVICLVLMAALGVLL) threads the bilayer. The Extracellular portion of the chain corresponds to 32–190 (KNSLTKRSVQ…FRYICKQQLI (159 aa)). Intrachain disulfides connect Cys69-Cys81, Cys72-Cys83, Cys100-Cys185, and Cys163-Cys177. In terms of domain architecture, C-type lectin spans 79-186 (YQCNCYFISN…CEKKFRYICK (108 aa)). Residues Asn104 and Asn144 are each glycosylated (N-linked (GlcNAc...) asparagine).

Can form disulfide-bonded heterodimer with NKG2 family members KLRC1 and KLRC2. KLRD1-KLRC1 heterodimer interacts with peptide-bound MHC-E-B2M heterotrimeric complex. KLRD1 plays a prominent role in directly interacting with MHC-E. KLRD1-KLRC1 interacts with much higher affinity with peptide-bound MHC-E-B2M than KLRD1-KLRC2. Interacts with the adapter protein TYROBP/DAP12; this interaction is required for cell surface expression and cell activation.

The protein resides in the cell membrane. In terms of biological role, immune receptor involved in self-nonself discrimination. In complex with KLRC1 or KLRC2 on cytotoxic and regulatory lymphocyte subsets, recognizes non-classical major histocompatibility (MHC) class Ib molecule MHC-E loaded with self-peptides derived from the signal sequence of classical MHC class Ia and non-classical MHC class Ib molecules. Enables cytotoxic cells to monitor the expression of MHC class I molecules in healthy cells and to tolerate self. Primarily functions as a ligand binding subunit as it lacks the capacity to signal. Its function is as follows. KLRD1-KLRC1 acts as an immune inhibitory receptor. Key inhibitory receptor on natural killer (NK) cells that regulates their activation and effector functions. Dominantly counteracts T cell receptor signaling on a subset of memory/effector CD8-positive T cells as part of an antigen-driven response to avoid autoimmunity. On intraepithelial CD8-positive gamma-delta regulatory T cells triggers TGFB1 secretion, which in turn limits the cytotoxic programming of intraepithelial CD8-positive alpha-beta T cells, distinguishing harmless from pathogenic antigens. In MHC-E-rich tumor microenvironment, acts as an immune inhibitory checkpoint and may contribute to progressive loss of effector functions of NK cells and tumor-specific T cells, a state known as cell exhaustion. Upon MHC-E-peptide binding, transmits intracellular signals through KLRC1 immunoreceptor tyrosine-based inhibition motifs (ITIMs) by recruiting INPP5D/SHIP-1 and INPPL1/SHIP-2 tyrosine phosphatases to ITIMs, and ultimately opposing signals transmitted by activating receptors through dephosphorylation of proximal signaling molecules. Functionally, KLRD1-KLRC2 acts as an immune activating receptor. On cytotoxic lymphocyte subsets recognizes MHC-E loaded with signal sequence-derived peptides from non-classical MHC class Ib MHC-G molecules, likely playing a role in the generation and effector functions of adaptive NK cells and in maternal-fetal tolerance during pregnancy. Regulates the effector functions of terminally differentiated cytotoxic lymphocyte subsets, and in particular may play a role in adaptive NK cell response to viral infection. Upon MHC-E-peptide binding, transmits intracellular signals via the adapter protein TYROBP/DAP12, triggering the phosphorylation of proximal signaling molecules and cell activation. The protein is Natural killer cells antigen CD94 (KLRD1) of Bos taurus (Bovine).